The primary structure comprises 204 residues: Large ribosomal subunit protein eL15 (204 aa).

It belongs to the eukaryotic ribosomal protein eL15 family. As to quaternary structure, component of the large ribosomal subunit.

It localises to the cytoplasm. In terms of biological role, component of the large ribosomal subunit. The ribosome is a large ribonucleoprotein complex responsible for the synthesis of proteins in the cell. This Hypophthalmichthys nobilis (Bighead carp) protein is Large ribosomal subunit protein eL15 (rpl15).